The primary structure comprises 124 residues: Small ribosomal subunit protein uS13 (124 aa).

Residues 97–124 are disordered; that stretch reads PVRGQRTKTNARTRKGPKRTIAGKKKAR.

The protein belongs to the universal ribosomal protein uS13 family. In terms of assembly, part of the 30S ribosomal subunit. Forms a loose heterodimer with protein S19. Forms two bridges to the 50S subunit in the 70S ribosome.

In terms of biological role, located at the top of the head of the 30S subunit, it contacts several helices of the 16S rRNA. In the 70S ribosome it contacts the 23S rRNA (bridge B1a) and protein L5 of the 50S subunit (bridge B1b), connecting the 2 subunits; these bridges are implicated in subunit movement. Contacts the tRNAs in the A and P-sites. The sequence is that of Small ribosomal subunit protein uS13 from Mycolicibacterium gilvum (strain PYR-GCK) (Mycobacterium gilvum (strain PYR-GCK)).